Reading from the N-terminus, the 313-residue chain is Dimethyladenosine transferase (313 aa).

The disordered stretch occupies residues 1-21 (MPKVKSGAIGRRRGRQEQRRE). S-adenosyl-L-methionine is bound by residues His-37, Leu-39, Gly-64, Glu-85, Asp-113, and Asn-128.

Belongs to the class I-like SAM-binding methyltransferase superfamily. rRNA adenine N(6)-methyltransferase family. As to quaternary structure, part of the small subunit (SSU) processome, composed of more than 70 proteins and the RNA chaperone small nucleolar RNA (snoRNA) U3.

The protein resides in the nucleus. The protein localises to the nucleoplasm. It localises to the nucleolus. It carries out the reaction adenosine(1779)/adenosine(1780) in 18S rRNA + 4 S-adenosyl-L-methionine = N(6)-dimethyladenosine(1779)/N(6)-dimethyladenosine(1780) in 18S rRNA + 4 S-adenosyl-L-homocysteine + 4 H(+). Its function is as follows. Specifically dimethylates two adjacent adenosines in the loop of a conserved hairpin near the 3'-end of 18S rRNA in the 40S particle. Involved in the pre-rRNA processing steps leading to small-subunit rRNA production independently of its RNA-modifying catalytic activity. Part of the small subunit (SSU) processome, first precursor of the small eukaryotic ribosomal subunit. During the assembly of the SSU processome in the nucleolus, many ribosome biogenesis factors, an RNA chaperone and ribosomal proteins associate with the nascent pre-rRNA and work in concert to generate RNA folding, modifications, rearrangements and cleavage as well as targeted degradation of pre-ribosomal RNA by the RNA exosome. This is Dimethyladenosine transferase from Homo sapiens (Human).